The sequence spans 287 residues: Thymidylate synthase (287 aa).

A dUMP-binding site is contributed by R21. H51 provides a ligand contact to (6R)-5,10-methylene-5,6,7,8-tetrahydrofolate. R150–R151 is a binding site for dUMP. The Nucleophile role is filled by C170. Residues R190–D193, N201, and H231–Y233 each bind dUMP. D193 serves as a coordination point for (6R)-5,10-methylene-5,6,7,8-tetrahydrofolate. A286 is a binding site for (6R)-5,10-methylene-5,6,7,8-tetrahydrofolate.

Belongs to the thymidylate synthase family. Bacterial-type ThyA subfamily. In terms of assembly, homodimer.

It is found in the cytoplasm. The enzyme catalyses dUMP + (6R)-5,10-methylene-5,6,7,8-tetrahydrofolate = 7,8-dihydrofolate + dTMP. Its pathway is pyrimidine metabolism; dTTP biosynthesis. In terms of biological role, catalyzes the reductive methylation of 2'-deoxyuridine-5'-monophosphate (dUMP) to 2'-deoxythymidine-5'-monophosphate (dTMP) while utilizing 5,10-methylenetetrahydrofolate (mTHF) as the methyl donor and reductant in the reaction, yielding dihydrofolate (DHF) as a by-product. This enzymatic reaction provides an intracellular de novo source of dTMP, an essential precursor for DNA biosynthesis. The chain is Thymidylate synthase from Mycoplasma pneumoniae (strain ATCC 29342 / M129 / Subtype 1) (Mycoplasmoides pneumoniae).